The following is a 245-amino-acid chain: Acetoacetate decarboxylase (245 aa).

Lys-116 acts as the Schiff-base intermediate with acetoacetate in catalysis.

Belongs to the ADC family.

The enzyme catalyses acetoacetate + H(+) = acetone + CO2. Catalyzes the conversion of acetoacetate to acetone and carbon dioxide. The protein is Acetoacetate decarboxylase of Acidiphilium cryptum (strain JF-5).